We begin with the raw amino-acid sequence, 493 residues long: Probable fatty acyl-CoA reductase 4 (493 aa).

The protein belongs to the fatty acyl-CoA reductase family. Expressed in the endodermal cell layer surrounding the central vasculature in roots. Expressed in the hilum region of seeds. Expressed in stamen filaments and receptacle of siliques.

The catalysed reaction is a long-chain fatty acyl-CoA + 2 NADPH + 2 H(+) = a long-chain primary fatty alcohol + 2 NADP(+) + CoA. Catalyzes the reduction of fatty acyl-CoA to fatty alcohols. Catalyzes specifically the formation of C18:0 and C20:0 fatty alcohols. Provides the fatty alcohols required for synthesis of suberin in roots, seed coat and wound-induced leaf tissue. Provides the fatty alcohols required for synthesis of alkyl hydroxycinnamates in root waxes. The sequence is that of Probable fatty acyl-CoA reductase 4 from Arabidopsis thaliana (Mouse-ear cress).